Reading from the N-terminus, the 179-residue chain is Inner membrane-spanning protein YciB (179 aa).

5 helical membrane passes run 22–42 (IYAA…YSWV), 50–70 (MALI…FFHN), 76–96 (WKVT…QWVM), 121–141 (LAWA…AFWL), and 149–169 (FKVF…GIYI).

This sequence belongs to the YciB family.

It localises to the cell inner membrane. Plays a role in cell envelope biogenesis, maintenance of cell envelope integrity and membrane homeostasis. The chain is Inner membrane-spanning protein YciB from Klebsiella pneumoniae subsp. pneumoniae (strain ATCC 700721 / MGH 78578).